A 158-amino-acid chain; its full sequence is Small ribosomal subunit protein uS7 (158 aa).

It belongs to the universal ribosomal protein uS7 family. In terms of assembly, part of the 30S ribosomal subunit. Contacts proteins S9 and S11.

In terms of biological role, one of the primary rRNA binding proteins, it binds directly to 16S rRNA where it nucleates assembly of the head domain of the 30S subunit. Is located at the subunit interface close to the decoding center, probably blocks exit of the E-site tRNA. This chain is Small ribosomal subunit protein uS7, found in Gluconacetobacter diazotrophicus (strain ATCC 49037 / DSM 5601 / CCUG 37298 / CIP 103539 / LMG 7603 / PAl5).